We begin with the raw amino-acid sequence, 128 residues long: Leucine-rich single-pass membrane protein 1 (128 aa).

S24 is modified (phosphoserine). The chain crosses the membrane as a helical span at residues V65 to I85. Residues Q87–K111 are a coiled coil.

The protein resides in the membrane. In Bos taurus (Bovine), this protein is Leucine-rich single-pass membrane protein 1 (LSMEM1).